We begin with the raw amino-acid sequence, 461 residues long: Transforming growth factor beta-1-induced transcript 1 protein (461 aa).

Met1 is subject to N-acetylmethionine. The interval 1-87 (MEDLDALLSD…PFSSSSGVLG (87 aa)) is disordered. The transcription activation stretch occupies residues 1–200 (MEDLDALLSD…GSPSPPEPTG (200 aa)). The interval 1–240 (MEDLDALLSD…CNKPIAGQVV (240 aa)) is interaction with PTK2B/PYK2. Residues 3–15 (DLDALLSDLETTT) carry the LD motif 1 motif. At Thr33 the chain carries Phosphothreonine. Position 38 is a phosphotyrosine (Tyr38). The segment covering 40–52 (HQPQTGSGESSGA) has biased composition (polar residues). Tyr60 bears the Phosphotyrosine; by FAK2 and FYN mark. The residue at position 68 (Ser68) is a Phosphoserine. An interaction with PTK2/FAK1 region spans residues 83–136 (SGVLGTGLCELDRLLQELNATQFNITDEIMSQFPSSKVASGEQKEDQSEDKKRP). An LD motif 2 motif is present at residues 92 to 104 (ELDRLLQELNATQ). The segment at 116–152 (PSSKVASGEQKEDQSEDKKRPSLPSSPSPGLPKASAT) is disordered. Basic and acidic residues predominate over residues 124 to 135 (EQKEDQSEDKKR). Residues Ser137, Ser140, Ser141, Ser143, Ser164, and Ser186 each carry the phosphoserine modification. The short motif at 157-168 (ELDRLMASLSDF) is the LD motif 3 element. Residues 172-205 (NHLPASGPTQPPVVSSTNEGSPSPPEPTGKGSLD) are disordered. Residues 183–192 (PVVSSTNEGS) are compositionally biased toward polar residues. Thr188 is subject to Phosphothreonine. A phosphoserine mark is found at Ser192 and Ser194. The LD motif 4 signature appears at 203 to 215 (SLDTMLGLLQSDL). 4 LIM zinc-binding domains span residues 226–285 (GLCG…RFSP), 286–343 (RCGF…QLFA), 344–403 (PRCQ…RRGS), and 404–461 (LCAT…KLFG). Ser403 carries the post-translational modification Phosphoserine. Thr407 is subject to Phosphothreonine.

This sequence belongs to the paxillin family. Homooligomer. Interacts with PPARG. Interacts with TRAF4. Interacts with CRIP2. Interacts with HSPB1. Interacts with ILK. Interacts with LIMS1 and LIMS2. Interacts with NCK2. Interacts with NUDT16L1. Interacts with PAK. Interacts with PTPN12. Interacts with TCF3. Interacts with TCF7L2. Interacts with VCL. Interacts (via LD motif 3) with GIT1. Also interacts with GIT2. Forms a complex with ARHGEF7. Interacts with AR/androgen receptor in a ligand-dependent manner. Interacts with CSK. Interacts with PTK2/FAK1 and PTK2B/PYK2. Interacts with SLC6A3 and SLC6A4. Interacts with NR3C1. Interacts with SMAD3. Interacts with MAPK15. Interacts with SRC. Interacts with LYN. Interacts with talin. Interacts (via LIM zinc-binding domain 2) with CBLC (via RING-type zinc finger); the interaction is direct and enhances CBLC E3 ubiquitin-protein ligase activity. Interacts with PARVA. Interacts with PXN. Phosphorylated by gonadotropin-releasing hormone-activated SRC. In terms of tissue distribution, expressed in platelets, smooth muscle and prostate stromal cells (at protein level).

The protein localises to the cell junction. The protein resides in the focal adhesion. It localises to the nucleus matrix. It is found in the cytoplasm. Its subcellular location is the cytoskeleton. Its function is as follows. Functions as a molecular adapter coordinating multiple protein-protein interactions at the focal adhesion complex and in the nucleus. Links various intracellular signaling modules to plasma membrane receptors and regulates the Wnt and TGFB signaling pathways. May also regulate SLC6A3 and SLC6A4 targeting to the plasma membrane hence regulating their activity. In the nucleus, functions as a nuclear receptor coactivator regulating glucocorticoid, androgen, mineralocorticoid and progesterone receptor transcriptional activity. May play a role in the processes of cell growth, proliferation, migration, differentiation and senescence. May have a zinc-dependent DNA-binding activity. The chain is Transforming growth factor beta-1-induced transcript 1 protein (TGFB1I1) from Homo sapiens (Human).